Reading from the N-terminus, the 456-residue chain is Imidazolonepropionase (456 aa).

Fe(3+) is bound by residues histidine 104 and histidine 106. Zn(2+) contacts are provided by histidine 104 and histidine 106. 4-imidazolone-5-propanoate is bound by residues arginine 113, tyrosine 176, and histidine 209. Tyrosine 176 is a binding site for N-formimidoyl-L-glutamate. Histidine 274 lines the Fe(3+) pocket. Residue histidine 274 participates in Zn(2+) binding. Residue glutamine 277 participates in 4-imidazolone-5-propanoate binding. Fe(3+) is bound at residue aspartate 349. Zn(2+) is bound at residue aspartate 349. 2 residues coordinate N-formimidoyl-L-glutamate: asparagine 351 and glycine 353. Serine 354 contacts 4-imidazolone-5-propanoate.

This sequence belongs to the metallo-dependent hydrolases superfamily. HutI family. Requires Zn(2+) as cofactor. Fe(3+) serves as cofactor.

It localises to the cytoplasm. It catalyses the reaction 4-imidazolone-5-propanoate + H2O = N-formimidoyl-L-glutamate. It participates in amino-acid degradation; L-histidine degradation into L-glutamate; N-formimidoyl-L-glutamate from L-histidine: step 3/3. Catalyzes the hydrolytic cleavage of the carbon-nitrogen bond in imidazolone-5-propanoate to yield N-formimidoyl-L-glutamate. It is the third step in the universal histidine degradation pathway. The chain is Imidazolonepropionase from Verminephrobacter eiseniae (strain EF01-2).